The primary structure comprises 449 residues: MPKNKKRNAPHRGGGGGGGSGAATSAATAGGPHRTVQPFSDEDASIETMSHCSGYSDPSSFAEDGPEVLDEEGTQEDLEYKLKGLIDLTLDKSAKTRQAALEGLKNALSSKVLYEFVLERRMTLTDSIERCLKKGKSDEQRAAAAVASVLCIQLGPGFESEEILKTLGPILKKIICDGAASIQARQTCATCFGVCCFIATDDITELYSTLECFENIFTKSYLKEKDTNVTCSTPNTVLHISSLLAWTLLLTICPINEVKKKLELHFHKLPSLLSCDDVNMRIAAGESLALLFELARGMESDFFYEDMDSLTQMLRALATDGNKHRAKVDKRKQRSVFRDVLRAVEERDFPTETVKFGPERMYIDSWVKKHTYDTFKEVLGSGMQYHLQTNEFLRNVFELGPPVMLDAATLKTMKISRFERHLYNSAAFKARTKARSKCRDKRADVGEFL.

The segment covering 1-10 (MPKNKKRNAP) has biased composition (basic residues). Positions 1-42 (MPKNKKRNAPHRGGGGGGGSGAATSAATAGGPHRTVQPFSDE) are disordered. Over residues 12-21 (RGGGGGGGSG) the composition is skewed to gly residues. Low complexity predominate over residues 22-31 (AATSAATAGG).

This sequence belongs to the IFRD family. As to quaternary structure, interacts with PSIP1/LEDGF.

Could play a role in regulating gene activity in the proliferative and/or differentiative pathways induced by NGF. May be an autocrine factor that attenuates or amplifies the initial ligand-induced signal. This Mus musculus (Mouse) protein is Interferon-related developmental regulator 1 (Ifrd1).